Here is a 295-residue protein sequence, read N- to C-terminus: Alpha-soluble NSF attachment protein (295 aa).

N-acetylmethionine is present on Met1. Residues Ser26, Ser29, and Ser195 each carry the phosphoserine modification.

Belongs to the SNAP family. As to quaternary structure, interacts with PRKCABP, and disrupts the interaction between GRIA2 and PRKCABP, leading to the internalization of GRIA2. Found in a complex with VAMP8. Component of a SNARE-like complex that contains at least ZW10, USE1L, RINT1, STX18 and NAPA/SNAP-alpha. Interacts with VTI1A. Interacts with STX12. Interacts with GNA12 (via N-terminus); the interaction promotes CDH5 localization to plasma membrane.

It is found in the cell membrane. Required for vesicular transport between the endoplasmic reticulum and the Golgi apparatus. Together with GNA12 promotes CDH5 localization to plasma membrane. This chain is Alpha-soluble NSF attachment protein (Napa), found in Mus musculus (Mouse).